We begin with the raw amino-acid sequence, 1226 residues long: Methionine synthase (1226 aa).

One can recognise a Hcy-binding domain in the interval 6–326; that stretch reads RQQLEQQLKQ…EHIAAIAKAV (321 aa). Zn(2+) contacts are provided by Cys248, Cys311, and Cys312. The Pterin-binding domain maps to 357-618; that stretch reads FVNVGERTNV…VPLKLREAVE (262 aa). Residues 651–745 enclose the B12-binding N-terminal domain; it reads SALEWRAWPV…FINAQKSGST (95 aa). Methylcob(III)alamin-binding positions include Glu695, 757-761, His760, Ser805, Thr809, and Ala861; that span reads GDVHD. Residues 747–882 enclose the B12-binding domain; that stretch reads NGKILLATVK…SDEQRPGFIE (136 aa). The AdoMet activation domain maps to 898–1226; sequence KTPKSRPVTL…EKWLAPNLDA (329 aa). Residues Asp948, Arg1136, and 1191 to 1192 each bind S-adenosyl-L-methionine; that span reads YF.

Belongs to the vitamin-B12 dependent methionine synthase family. Methylcob(III)alamin is required as a cofactor. Zn(2+) serves as cofactor.

The catalysed reaction is (6S)-5-methyl-5,6,7,8-tetrahydrofolate + L-homocysteine = (6S)-5,6,7,8-tetrahydrofolate + L-methionine. It participates in amino-acid biosynthesis; L-methionine biosynthesis via de novo pathway; L-methionine from L-homocysteine (MetH route): step 1/1. Catalyzes the transfer of a methyl group from methyl-cobalamin to homocysteine, yielding enzyme-bound cob(I)alamin and methionine. Subsequently, remethylates the cofactor using methyltetrahydrofolate. The chain is Methionine synthase (metH) from Vibrio cholerae serotype O1 (strain ATCC 39315 / El Tor Inaba N16961).